A 103-amino-acid chain; its full sequence is Histone H4 (103 aa).

Over residues 1 to 14 (MSGRGKGGKGLGKG) the composition is skewed to gly residues. The segment at 1 to 20 (MSGRGKGGKGLGKGGAKRHR) is disordered. The DNA-binding element occupies 17-21 (KRHRK).

The protein belongs to the histone H4 family. As to quaternary structure, the nucleosome is a histone octamer containing two molecules each of H2A, H2B, H3 and H4 assembled in one H3-H4 heterotetramer and two H2A-H2B heterodimers. The octamer wraps approximately 147 bp of DNA.

Its subcellular location is the nucleus. It is found in the chromosome. In terms of biological role, core component of nucleosome. Nucleosomes wrap and compact DNA into chromatin, limiting DNA accessibility to the cellular machineries which require DNA as a template. Histones thereby play a central role in transcription regulation, DNA repair, DNA replication and chromosomal stability. DNA accessibility is regulated via a complex set of post-translational modifications of histones, also called histone code, and nucleosome remodeling. The protein is Histone H4 (H4-I) of Chlamydomonas reinhardtii (Chlamydomonas smithii).